A 466-amino-acid polypeptide reads, in one-letter code: Uronate isomerase (466 aa).

This sequence belongs to the metallo-dependent hydrolases superfamily. Uronate isomerase family.

The catalysed reaction is D-glucuronate = D-fructuronate. It carries out the reaction aldehydo-D-galacturonate = keto-D-tagaturonate. It functions in the pathway carbohydrate metabolism; pentose and glucuronate interconversion. The polypeptide is Uronate isomerase (Clostridium perfringens (strain 13 / Type A)).